The primary structure comprises 299 residues: S-methyl-5'-thioadenosine phosphorylase (299 aa).

Residues S14, 56–57 (RH), and 89–90 (SA) each bind phosphate. Residue M191 coordinates substrate. T192 provides a ligand contact to phosphate. 215–217 (DYD) is a substrate binding site.

The protein belongs to the PNP/MTAP phosphorylase family. MTAP subfamily. Homohexamer. Dimer of a homotrimer.

The enzyme catalyses S-methyl-5'-thioadenosine + phosphate = 5-(methylsulfanyl)-alpha-D-ribose 1-phosphate + adenine. It participates in amino-acid biosynthesis; L-methionine biosynthesis via salvage pathway; S-methyl-5-thio-alpha-D-ribose 1-phosphate from S-methyl-5'-thioadenosine (phosphorylase route): step 1/1. Catalyzes the reversible phosphorylation of S-methyl-5'-thioadenosine (MTA) to adenine and 5-methylthioribose-1-phosphate. Involved in the breakdown of MTA, a major by-product of polyamine biosynthesis. Responsible for the first step in the methionine salvage pathway after MTA has been generated from S-adenosylmethionine. Has broad substrate specificity with 6-aminopurine nucleosides as preferred substrates. This is S-methyl-5'-thioadenosine phosphorylase from Gloeobacter violaceus (strain ATCC 29082 / PCC 7421).